We begin with the raw amino-acid sequence, 518 residues long: MRSAAFSLPFCDWKCRRRLGAADKWPLLKRSFRILPPLIAGGATTEVKEVEKFADEEDFIKAGGSELFFVKMQERKPMEKQRKIADELTKISSGDPMLDLIVIGCGPAGMSLAAEAGKRGLSVGLIGPDLPFTNNYGVWEDEFKGLGLESCIEHVWQDTIAYLDSSDPILISRAYGRVSRHLLHAELLRRCQETGVGFLDSKVEKIIEASDGSSIVVCEGDLMLPCRLATVASGAASGKLLQYEVGGPRVSVQTAYGVEAEVGNNPYDPRSMVFMDYRDHVKGKIISDEEYPTFLYVMPISSTRVFYEETCLASRNAMPFDRLRSKLMSRLKAMGVSILKIYEEEWSYIPVGGSLPNTEQKNLAFGVAASMVHPATGYSIVRSLSEAPQYASVITNILKRNSNSSQNNVIGSSYNPSVLAWRTLWPQEGKRQRAFFLFGLALILQLDIDGIRIFFQTFFRLPDWMWQGFLGSTLSSAGLIWFAFYMFAIAPNSLRICLIKHLLSDPTGSTMIREYLTL.

100–128 (LIVIGCGPAGMSLAAEAGKRGLSVGLIGP) is a binding site for NAD(+). Transmembrane regions (helical) follow at residues 435–455 (FFLF…RIFF) and 469–489 (FLGS…MFAI).

Belongs to the lycopene cyclase family. In terms of tissue distribution, expressed in leaves and roots. Detected in flower buds and lips.

It localises to the plastid. It is found in the chloroplast membrane. It carries out the reaction a carotenoid psi-end group = a carotenoid epsilon-end group. The protein operates within carotenoid biosynthesis; alpha-zeacarotene biosynthesis. It functions in the pathway carotenoid biosynthesis; delta-carotene biosynthesis. Catalyzes the single epsilon-cyclization reaction which converts lycopene to delta-carotene and neurosporene to alpha-zeacarotene. Required for lutein biosynthesis. In Oncidium hybrid cultivar (Orchid), this protein is Lycopene epsilon cyclase, chloroplastic.